The chain runs to 101 residues: Putative pterin-4-alpha-carbinolamine dehydratase (101 aa).

It belongs to the pterin-4-alpha-carbinolamine dehydratase family.

It catalyses the reaction (4aS,6R)-4a-hydroxy-L-erythro-5,6,7,8-tetrahydrobiopterin = (6R)-L-erythro-6,7-dihydrobiopterin + H2O. This is Putative pterin-4-alpha-carbinolamine dehydratase from Burkholderia mallei (strain ATCC 23344).